The primary structure comprises 198 residues: Nucleoside triphosphate pyrophosphatase (198 aa).

The Proton acceptor role is filled by D75.

The protein belongs to the Maf family. The cofactor is a divalent metal cation.

It localises to the cytoplasm. The catalysed reaction is a ribonucleoside 5'-triphosphate + H2O = a ribonucleoside 5'-phosphate + diphosphate + H(+). It carries out the reaction a 2'-deoxyribonucleoside 5'-triphosphate + H2O = a 2'-deoxyribonucleoside 5'-phosphate + diphosphate + H(+). Nucleoside triphosphate pyrophosphatase. May have a dual role in cell division arrest and in preventing the incorporation of modified nucleotides into cellular nucleic acids. The protein is Nucleoside triphosphate pyrophosphatase of Hyphomonas neptunium (strain ATCC 15444).